A 423-amino-acid polypeptide reads, in one-letter code: MASALEQFVNSVRQLSSQGQMTQLCELINKSGELLAKNLSHLDTVLGALDVQEHSLGVLAVLFVKFSMPSIPDFETLFSQVQLFISTCNGEHIRYATDTFAGLCHQLTNALVERKQPLRGICVLRQAIDKMQMNANQLTSIHADLCQLSLLAKCFKPALAYLDVDMMDICKENGAYDAKPFLCYYYYGGMIYTGLKNFERALYFYEQAITTPAMAVSHIMLEAYKKYILVSLILHGKVQQLPKYTSQIVGRFIKPLSNAYHELAQVYSTNNPAELRNLVSKHNETFTRDNNMGLVKQCLSSLYKKNIQRLTKTFLTLSLQDMASRVQLSGAQEAEKYVLYMIEDGEIFASINQKDGMVCFHDNPEKYNNPAMLHNIDQEMLRCIDLDDRLKAMDQEITVNPQFVQKSMGSQDDDSGSKPSSYS.

A PCI domain is found at asparagine 197 to glutamate 365. A disordered region spans residues phenylalanine 403 to serine 423.

It belongs to the CSN3 family. In terms of assembly, component of the CSN complex, probably composed of cops1, cops2, cops3, cops4, cops5, cops6, cops7, cops8 and cops9.

It is found in the cytoplasm. The protein localises to the nucleus. Functionally, component of the COP9 signalosome complex (CSN), a complex involved in various cellular and developmental processes. The CSN complex is an essential regulator of the ubiquitin (Ubl) conjugation pathway by mediating the deneddylation of the cullin subunits of E3 ligase complexes, leading to modify the Ubl ligase activity. In Xenopus tropicalis (Western clawed frog), this protein is COP9 signalosome complex subunit 3 (cops3).